Consider the following 246-residue polypeptide: Bidirectional sugar transporter SWEET3a (246 aa).

Residues 1 to 6 (MFPDIR) are Extracellular-facing. Residues 7 to 27 (FIVGIIGSVACMLLYSAPILT) traverse the membrane as a helical segment. A MtN3/slv 1 domain is found at 7–96 (FIVGIIGSVA…ISIYVWFAPR (90 aa)). The Cytoplasmic portion of the chain corresponds to 28-42 (FKRVIKKASVEEFSC). Residues 43–63 (IPYILALFSCLTYSWYGFPVV) form a helical membrane-spanning segment. At 64–74 (SYGWENMTVCS) the chain is on the extracellular side. N-linked (GlcNAc...) asparagine glycosylation occurs at N69. A helical transmembrane segment spans residues 75 to 95 (ISSLGVLFEGTFISIYVWFAP). Over 96 to 101 (RGKKKQ) the chain is Cytoplasmic. Residues 102 to 122 (VMLMASLILAVFCMTVFFSSF) form a helical membrane-spanning segment. Residues 123-131 (SIHNHHIRK) are Extracellular-facing. The chain crosses the membrane as a helical span at residues 132 to 152 (VFVGSVGLVSSISMYGSPLVA). The 85-residue stretch at 133–217 (FVGSVGLVSS…VVYCIYSKCK (85 aa)) folds into the MtN3/slv 2 domain. Residues 153 to 166 (MKQVIRTKSVEFMP) are Cytoplasmic-facing. The chain crosses the membrane as a helical span at residues 167–187 (FYLSLFTLFTSLTWMAYGVIG). At 188 to 191 (RDPF) the chain is on the extracellular side. A helical membrane pass occupies residues 192-212 (IATPNCIGSIMGILQLVVYCI). Residues 213–246 (YSKCKEAPKVLHDIEQANVVKIPTSHVDTKGHNP) are Cytoplasmic-facing.

The protein belongs to the SWEET sugar transporter family. As to quaternary structure, forms homooligomers and/or heterooligomers.

The protein localises to the cell membrane. In terms of biological role, mediates both low-affinity uptake and efflux of sugar across the plasma membrane. The sequence is that of Bidirectional sugar transporter SWEET3a (SWEET3A) from Oryza sativa subsp. japonica (Rice).